The following is a 787-amino-acid chain: Filamentous growth regulator 27 (787 aa).

The interval 1–22 is disordered; the sequence is MSAPIVETKKASKRRIRRIPDD. Residues 31–57 constitute a DNA-binding region (zn(2)-C6 fungal-type); it reads CDNCKKRKFKCSGEKPCFECSKKGHDC. Residues 69–97 are a coiled coil; the sequence is GERMAKLKQKKDNNEKQRELVNEQIAQSS. Disordered stretches follow at residues 120–140 and 200–221; these read SSHS…SSIP and RHKS…KGGI. Positions 209 to 221 are enriched in polar residues; the sequence is DNNTNNVPKKGGI.

It localises to the nucleus. In terms of biological role, transcription factor involved in yeast cell adherence to silicone substrate, filamentous growth, and biofilm formation. In Candida albicans (strain SC5314 / ATCC MYA-2876) (Yeast), this protein is Filamentous growth regulator 27 (FGR27).